The chain runs to 623 residues: Bifunctional dihydrofolate reductase-thymidylate synthase (623 aa).

In terms of domain architecture, DHFR spans 9–237; that stretch reads DIYAICACCK…TTLDFLVYSK (229 aa). 13-14 serves as a coordination point for substrate; it reads IC. Residues A15 and 38–44 contribute to the NADP(+) site; that span reads GLGNKGT. D53 lines the substrate pocket. Repeat copies occupy residues 88 to 91, 94 to 97, and 100 to 103. A 3 X 4 AA repeats of G-G-D-N region spans residues 88 to 103; it reads GGDNTSGGDNTHGGDN. NADP(+) is bound by residues 115 to 117, 137 to 139, and D153; these read RSS and SKT. Substrate contacts are provided by I173, Y179, and T194. Residue 174 to 181 coordinates NADP(+); the sequence is GGAQVYRE. The segment at 263–309 is disordered; sequence TAMRRNVAPRTAAPPMGPHSRANGERAPPRARARRTTPRQRKTTSCT. A compositionally biased stretch (basic residues) spans 291 to 304; the sequence is PRARARRTTPRQRK. The segment at 337–623 is thymidylate synthase; it reads QHPEYQYLGI…HDKITMEMAA (287 aa). R360 contacts dUMP. C505 is a catalytic residue. DUMP-binding positions include H506, 524 to 528, N536, and 566 to 568; these read QRSCD and HVY.

In the N-terminal section; belongs to the dihydrofolate reductase family. The protein in the C-terminal section; belongs to the thymidylate synthase family. Homodimer.

It catalyses the reaction (6S)-5,6,7,8-tetrahydrofolate + NADP(+) = 7,8-dihydrofolate + NADPH + H(+). It carries out the reaction dUMP + (6R)-5,10-methylene-5,6,7,8-tetrahydrofolate = 7,8-dihydrofolate + dTMP. The protein operates within cofactor biosynthesis; tetrahydrofolate biosynthesis; 5,6,7,8-tetrahydrofolate from 7,8-dihydrofolate: step 1/1. Its function is as follows. Bifunctional enzyme. Involved in de novo dTMP biosynthesis. Key enzyme in folate metabolism. Catalyzes an essential reaction for de novo glycine and purine synthesis, DNA precursor synthesis, and for the conversion of dUMP to dTMP. This Plasmodium vivax protein is Bifunctional dihydrofolate reductase-thymidylate synthase.